Here is a 119-residue protein sequence, read N- to C-terminus: UPF0342 protein Athe_0692 (119 aa).

It belongs to the UPF0342 family.

In Caldicellulosiruptor bescii (strain ATCC BAA-1888 / DSM 6725 / KCTC 15123 / Z-1320) (Anaerocellum thermophilum), this protein is UPF0342 protein Athe_0692.